Here is a 311-residue protein sequence, read N- to C-terminus: MIKEGFLIKTPKKLIALLGPSGSGKSALSIELAQELDAEIFSLDSLSIYKDINIASAKPSLKERKNIKHYALDHLNIDEKNNAPLFKTLLEDAMRVSSKEILLIVGGSSFYLKSILEGLSRMPKLSGEEVVKIEREIATLSNPYIFLKSIDPNMAFKIHPNDTYRTHKALEIFYATCTPPSEYFKANPKKPFEHAISLFALSIEKSALHNNIKRRTKNMLHSGLVEEIKALYTQYPKDSQPFKAIGVKESVLFLEKRLTLKELEEAITSNTMKLAKRQNTFNKTQFNNLYVGSAEEVRHAILKHSKSGIKG.

ATP is bound at residue 19–26 (GPSGSGKS). 21 to 26 (SGSGKS) lines the substrate pocket. The segment at 44–47 (DSLS) is interaction with substrate tRNA.

Belongs to the IPP transferase family. In terms of assembly, monomer. Mg(2+) serves as cofactor.

The catalysed reaction is adenosine(37) in tRNA + dimethylallyl diphosphate = N(6)-dimethylallyladenosine(37) in tRNA + diphosphate. In terms of biological role, catalyzes the transfer of a dimethylallyl group onto the adenine at position 37 in tRNAs that read codons beginning with uridine, leading to the formation of N6-(dimethylallyl)adenosine (i(6)A). The polypeptide is tRNA dimethylallyltransferase (Helicobacter pylori (strain ATCC 700392 / 26695) (Campylobacter pylori)).